The sequence spans 688 residues: MSKIRVHEYAKKNNISSKDLMTKLKEMNIEVSNHMTMLEDEVVNKLDNQYSAGAEKPSVADEFEVEEKVVRSKKNSNKNKKKGKANEDKRQDNFAGRQQTPIVETPDKITFSGSLTVGDLAKKLSKEPSEIIKKLFMLGIMATINQDLDKDTIELIATDYGIEVEEEVVVSETEFETFIDEQDDEENLKERPAVVTIMGHVDHGKTTLLDSIRNSKVTAGEAGGITQHIGAYQVDVNDKKITFLDTPGHAVFTTMRARGAQVTDITILVVAADDGVMPQTVEAISHAKAAGVPIIVAVNKMDKPAANPDRVMQELTEYELVPEAWGGDTIFVPISAIQGEGIDNLLEMILLVSEVEEYKANPNRYAAGTVIEAQLDKGKGTIATLLVQNGTLRVGDPIVVGTSFGRVRAMVSDIGRRVKVAGPSTPVEITGLNEVPQAGDRFMAFADEKKARQIGESRAQEALVAQRGEKSKFSLEDLFQQIQEGDVKEINLIVKADVQGSVEAMAASLRKIDVEGVKVKIIHTGVGAITESDIILASASNAIVIGFNVRPDVNAKRTAELEKVDVRLHRIIYKVIEEIESAMQGMLDPEFEEKVIGQAEVRQTFKVTKVGTIAGCYVIDGKITRDSGVRIIRDGVVVFEGKLDTLKRFKDDVKEVAQNYECGITIERYNDLKEGDIIEAYVMEEVKR.

The segment at 53–101 (GAEKPSVADEFEVEEKVVRSKKNSNKNKKKGKANEDKRQDNFAGRQQTP) is disordered. The segment covering 71–83 (RSKKNSNKNKKKG) has biased composition (basic residues). In terms of domain architecture, tr-type G spans 190–359 (ERPAVVTIMG…LLVSEVEEYK (170 aa)). The tract at residues 199 to 206 (GHVDHGKT) is G1. Position 199–206 (199–206 (GHVDHGKT)) interacts with GTP. The interval 224 to 228 (GITQH) is G2. Positions 245–248 (DTPG) are G3. GTP is bound by residues 245–249 (DTPGH) and 299–302 (NKMD). Residues 299–302 (NKMD) form a G4 region. The G5 stretch occupies residues 335–337 (SAI).

The protein belongs to the TRAFAC class translation factor GTPase superfamily. Classic translation factor GTPase family. IF-2 subfamily.

It localises to the cytoplasm. Its function is as follows. One of the essential components for the initiation of protein synthesis. Protects formylmethionyl-tRNA from spontaneous hydrolysis and promotes its binding to the 30S ribosomal subunits. Also involved in the hydrolysis of GTP during the formation of the 70S ribosomal complex. This chain is Translation initiation factor IF-2, found in Bacillus mycoides (strain KBAB4) (Bacillus weihenstephanensis).